Consider the following 204-residue polypeptide: Cysteine-rich protein 3 (204 aa).

Residues 3-64 enclose the LIM zinc-binding 1 domain; the sequence is WTCPRCQQPV…KPCYGALFGP (62 aa). A disordered region spans residues 88-107; the sequence is ISLSPSNFSPPRPRTGLSRA. An LIM zinc-binding 2 domain is found at 122–183; the sequence is SLCPGCGDPV…IPCYGYLFGP (62 aa).

Expressed specifically by the thymus.

The protein localises to the cytoplasm. In Mus musculus (Mouse), this protein is Cysteine-rich protein 3 (Crip3).